The primary structure comprises 91 residues: ATP synthase subunit c (91 aa).

2 helical membrane passes run 4 to 24 (FTMC…GTGI) and 53 to 73 (IGLA…LIIL).

Belongs to the ATPase C chain family. F-type ATPases have 2 components, F(1) - the catalytic core - and F(0) - the membrane proton channel. F(1) has five subunits: alpha(3), beta(3), gamma(1), delta(1), epsilon(1). F(0) has three main subunits: a(1), b(2) and c(10-14). The alpha and beta chains form an alternating ring which encloses part of the gamma chain. F(1) is attached to F(0) by a central stalk formed by the gamma and epsilon chains, while a peripheral stalk is formed by the delta and b chains.

The protein resides in the cell inner membrane. In terms of biological role, f(1)F(0) ATP synthase produces ATP from ADP in the presence of a proton or sodium gradient. F-type ATPases consist of two structural domains, F(1) containing the extramembraneous catalytic core and F(0) containing the membrane proton channel, linked together by a central stalk and a peripheral stalk. During catalysis, ATP synthesis in the catalytic domain of F(1) is coupled via a rotary mechanism of the central stalk subunits to proton translocation. Key component of the F(0) channel; it plays a direct role in translocation across the membrane. A homomeric c-ring of between 10-14 subunits forms the central stalk rotor element with the F(1) delta and epsilon subunits. In Geotalea uraniireducens (strain Rf4) (Geobacter uraniireducens), this protein is ATP synthase subunit c.